We begin with the raw amino-acid sequence, 656 residues long: Methionine--tRNA ligase (656 aa).

The 'HIGH' region motif lies at 13 to 23 (YYPSGNLHIGH). The short motif at 308 to 312 (KMSKS) is the 'KMSKS' region element. Lys311 contributes to the ATP binding site. The region spanning 556–656 (DFDKVEIKAA…SAIPNGAVIK (101 aa)) is the tRNA-binding domain.

Belongs to the class-I aminoacyl-tRNA synthetase family. MetG type 2B subfamily. As to quaternary structure, homodimer.

Its subcellular location is the cytoplasm. The catalysed reaction is tRNA(Met) + L-methionine + ATP = L-methionyl-tRNA(Met) + AMP + diphosphate. Is required not only for elongation of protein synthesis but also for the initiation of all mRNA translation through initiator tRNA(fMet) aminoacylation. This is Methionine--tRNA ligase from Staphylococcus epidermidis (strain ATCC 12228 / FDA PCI 1200).